Reading from the N-terminus, the 191-residue chain is dTTP/UTP pyrophosphatase (191 aa).

Aspartate 64 acts as the Proton acceptor in catalysis.

It belongs to the Maf family. YhdE subfamily. A divalent metal cation serves as cofactor.

The protein resides in the cytoplasm. It carries out the reaction dTTP + H2O = dTMP + diphosphate + H(+). The catalysed reaction is UTP + H2O = UMP + diphosphate + H(+). Functionally, nucleoside triphosphate pyrophosphatase that hydrolyzes dTTP and UTP. May have a dual role in cell division arrest and in preventing the incorporation of modified nucleotides into cellular nucleic acids. The polypeptide is dTTP/UTP pyrophosphatase (Thermosipho africanus (strain TCF52B)).